The sequence spans 492 residues: MANYFNTLSLREKLDQLGVCEFMDRSEFSDGVAALKGKKIVIVGCGAQGLNQGLNLRDSGLDVSYTLRKEAIDSKRQSFLNASENGFKVGTYEELIPTADLVINLTPDKQHTAVVSAVMPLMKKGSTLSYSHGFNIVEEGMQIRKDITVIMVAPKSPGSEVREEYKRGFGVPTLIAVHPENDPEGKGWDYAKAYCVGTGGDRAGVLKSSFVAEVKSDLMGEQTILCGLLQTGSILCFDKMVEKGIDKGYASKLIQYGWEVITESLKHGGISGMMDRLSNPAKIKAFQVSEELKDIMRPLFRKHQDDIISGEFSRIMMEDWANGDKNLLTWRAATGETAFEKTPAGDVKIAEQEYYDNGLLMVAMVRAGVELAFETMTESGIIDESAYYESLHETPLIANTIARKKLFEMNRVISDTAEYGCYLFDHACKPLLANFMKTVDTDIIGKNFNAGKDNGVDNQMLIAVNEVLRSHPIEIVGAELREAMTEMKAIVS.

Positions 17–208 (LGVCEFMDRS…GGDRAGVLKS (192 aa)) constitute a KARI N-terminal Rossmann domain. Residues 45-48 (CGAQ), Arg68, Arg76, Ser78, and 108-110 (DKQ) each bind NADP(+). The active site involves His132. Gly158 contributes to the NADP(+) binding site. KARI C-terminal knotted domains are found at residues 209 to 353 (SFVA…AEQE) and 354 to 487 (YYDN…MTEM). Residues Asp217, Glu221, Glu389, and Glu393 each contribute to the Mg(2+) site. Ser414 is a substrate binding site.

It belongs to the ketol-acid reductoisomerase family. Mg(2+) serves as cofactor.

It catalyses the reaction (2R)-2,3-dihydroxy-3-methylbutanoate + NADP(+) = (2S)-2-acetolactate + NADPH + H(+). It carries out the reaction (2R,3R)-2,3-dihydroxy-3-methylpentanoate + NADP(+) = (S)-2-ethyl-2-hydroxy-3-oxobutanoate + NADPH + H(+). The protein operates within amino-acid biosynthesis; L-isoleucine biosynthesis; L-isoleucine from 2-oxobutanoate: step 2/4. It functions in the pathway amino-acid biosynthesis; L-valine biosynthesis; L-valine from pyruvate: step 2/4. Functionally, involved in the biosynthesis of branched-chain amino acids (BCAA). Catalyzes an alkyl-migration followed by a ketol-acid reduction of (S)-2-acetolactate (S2AL) to yield (R)-2,3-dihydroxy-isovalerate. In the isomerase reaction, S2AL is rearranged via a Mg-dependent methyl migration to produce 3-hydroxy-3-methyl-2-ketobutyrate (HMKB). In the reductase reaction, this 2-ketoacid undergoes a metal-dependent reduction by NADPH to yield (R)-2,3-dihydroxy-isovalerate. The chain is Ketol-acid reductoisomerase (NADP(+)) from Cytophaga hutchinsonii (strain ATCC 33406 / DSM 1761 / CIP 103989 / NBRC 15051 / NCIMB 9469 / D465).